We begin with the raw amino-acid sequence, 1070 residues long: DNA-directed RNA polymerase subunit beta (1070 aa).

This sequence belongs to the RNA polymerase beta chain family. In plastids the minimal PEP RNA polymerase catalytic core is composed of four subunits: alpha, beta, beta', and beta''. When a (nuclear-encoded) sigma factor is associated with the core the holoenzyme is formed, which can initiate transcription.

The protein localises to the plastid. The protein resides in the chloroplast. It catalyses the reaction RNA(n) + a ribonucleoside 5'-triphosphate = RNA(n+1) + diphosphate. DNA-dependent RNA polymerase catalyzes the transcription of DNA into RNA using the four ribonucleoside triphosphates as substrates. This is DNA-directed RNA polymerase subunit beta from Phaseolus vulgaris (Kidney bean).